A 118-amino-acid chain; its full sequence is UPF0329 protein ECU03_0030/ECU05_0040/ECU06_0010/ECU06_1710/ECU11_0010 (118 aa).

The protein belongs to the UPF0329 family.

The polypeptide is UPF0329 protein ECU03_0030/ECU05_0040/ECU06_0010/ECU06_1710/ECU11_0010 (Encephalitozoon cuniculi (strain GB-M1) (Microsporidian parasite)).